The following is a 397-amino-acid chain: Elongation factor Tu (397 aa).

Residues 10-206 (KPHVNIGTIG…AVDTAIPEPE (197 aa)) form the tr-type G domain. The G1 stretch occupies residues 19–26 (GHIDHGKT). 19-26 (GHIDHGKT) lines the GTP pocket. Thr26 contributes to the Mg(2+) binding site. The segment at 62–66 (GITIS) is G2. Positions 83 to 86 (DCPG) are G3. Residues 83–87 (DCPGH) and 138–141 (NKAD) contribute to the GTP site. A G4 region spans residues 138 to 141 (NKAD). The G5 stretch occupies residues 176–178 (SAL).

This sequence belongs to the TRAFAC class translation factor GTPase superfamily. Classic translation factor GTPase family. EF-Tu/EF-1A subfamily. In terms of assembly, monomer.

The protein localises to the cytoplasm. The catalysed reaction is GTP + H2O = GDP + phosphate + H(+). Its function is as follows. GTP hydrolase that promotes the GTP-dependent binding of aminoacyl-tRNA to the A-site of ribosomes during protein biosynthesis. This chain is Elongation factor Tu, found in Kineococcus radiotolerans (strain ATCC BAA-149 / DSM 14245 / SRS30216).